The chain runs to 362 residues: MKTTPFTDVHIALGAKMHEFAGYNMPIEYGGIIDEHMNVVNNVGVFDVSHMGEFWVKGPNALRFLQKVSSNDASKLAVGQVQYCCFPNNDGGIVDDFLLYRYEEEKYMMVPNAANIAKDWAWCRQQNTMGAILENASDNIAQLAVQGPKATEVMQRLTDIDLNEITYYTFKVGSFAGCPDVIISATGYTGAGGFELYFYPQYAQKIWDALFEAGKPEGIKPAGLGARDTLRLEMGFCLYGNDICDTTSPIEAGLGWITKFTDDKMDMPSRKIMEEQKAGGLKRKLVAFELKDKGIPRQHYEIANAEGQIIGEVTSGTMSPCLKKGIGMGYVATEFSKVGTELGIMVRGRQLKAEIVKPPFRK.

Belongs to the GcvT family. The glycine cleavage system is composed of four proteins: P, T, L and H.

It carries out the reaction N(6)-[(R)-S(8)-aminomethyldihydrolipoyl]-L-lysyl-[protein] + (6S)-5,6,7,8-tetrahydrofolate = N(6)-[(R)-dihydrolipoyl]-L-lysyl-[protein] + (6R)-5,10-methylene-5,6,7,8-tetrahydrofolate + NH4(+). In terms of biological role, the glycine cleavage system catalyzes the degradation of glycine. This chain is Aminomethyltransferase, found in Porphyromonas gingivalis (strain ATCC 33277 / DSM 20709 / CIP 103683 / JCM 12257 / NCTC 11834 / 2561).